Here is a 370-residue protein sequence, read N- to C-terminus: MADKRDFYEILGVSKSATDAEIKKAYRQLAKKYHPDINKEDGAEAKFKEVQEAYEVLSDSQKRANYDQFGHAAFDQGAGGFGGGFSGGFDDFGDIFSSFFGGGGGGQRRNPNGPMKGQDRFMSMRIDFMEAVFGANKSVTLNVDEECTSCHGSGAHSKDDIKTCSRCGGTGQTVTQQRTPFGVFQSQATCPDCGGSGKTITKRCGECHGKGFNTKRVEVDIKIPAGIVTGQQLRVSGKGERGANGGPNGDLFIEIVVGTHKHFRREGNDIHINIPLSVIDATLGTEIEVPTVHGDVKLTIPAGTQPNTKFRLREKGVQDLRSGRMGDQYVEVKLEVPTKLSRQQREHLEALKETEVKGDSVFDRFKKAFK.

One can recognise a J domain in the interval aspartate 6–glycine 70. A CR-type zinc finger spans residues glycine 134–arginine 216. Zn(2+)-binding residues include cysteine 147, cysteine 150, cysteine 164, cysteine 167, cysteine 190, cysteine 193, cysteine 204, and cysteine 207. CXXCXGXG motif repeat units lie at residues cysteine 147–glycine 154, cysteine 164–glycine 171, cysteine 190–glycine 197, and cysteine 204–glycine 211.

Belongs to the DnaJ family. Homodimer. It depends on Zn(2+) as a cofactor.

It localises to the cytoplasm. Functionally, participates actively in the response to hyperosmotic and heat shock by preventing the aggregation of stress-denatured proteins and by disaggregating proteins, also in an autonomous, DnaK-independent fashion. Unfolded proteins bind initially to DnaJ; upon interaction with the DnaJ-bound protein, DnaK hydrolyzes its bound ATP, resulting in the formation of a stable complex. GrpE releases ADP from DnaK; ATP binding to DnaK triggers the release of the substrate protein, thus completing the reaction cycle. Several rounds of ATP-dependent interactions between DnaJ, DnaK and GrpE are required for fully efficient folding. Also involved, together with DnaK and GrpE, in the DNA replication of plasmids through activation of initiation proteins. This chain is Chaperone protein DnaJ, found in Erysipelothrix rhusiopathiae.